Here is a 277-residue protein sequence, read N- to C-terminus: Phosphatidylglycerol--prolipoprotein diacylglyceryl transferase (277 aa).

The next 4 membrane-spanning stretches (helical) occupy residues 18 to 38, 51 to 71, 89 to 109, and 116 to 136; these read ISVKWYGVIIASAVVIALLLA, IIVDLLIWAIPISIISARIYY, IWHGGIAIYGALIGAVLTAVI, and ISFWKLADVVAPSLIIAQAIG. Arg137 is a binding site for a 1,2-diacyl-sn-glycero-3-phospho-(1'-sn-glycerol). 3 consecutive transmembrane segments (helical) span residues 177 to 197, 205 to 225, and 235 to 255; these read QPTFLYESLWNVLGFIVLLII, GELFLSYVIWYSFGRFFIEGM, and FRVSQVLSLLLIVLSIGLIIY.

Belongs to the Lgt family.

It localises to the cell membrane. The enzyme catalyses L-cysteinyl-[prolipoprotein] + a 1,2-diacyl-sn-glycero-3-phospho-(1'-sn-glycerol) = an S-1,2-diacyl-sn-glyceryl-L-cysteinyl-[prolipoprotein] + sn-glycerol 1-phosphate + H(+). The protein operates within protein modification; lipoprotein biosynthesis (diacylglyceryl transfer). Catalyzes the transfer of the diacylglyceryl group from phosphatidylglycerol to the sulfhydryl group of the N-terminal cysteine of a prolipoprotein, the first step in the formation of mature lipoproteins. This chain is Phosphatidylglycerol--prolipoprotein diacylglyceryl transferase, found in Listeria innocua serovar 6a (strain ATCC BAA-680 / CLIP 11262).